A 449-amino-acid chain; its full sequence is Allantoinase (449 aa).

Zn(2+) is bound by residues His-61, His-63, Lys-148, His-184, His-240, and Asp-313. Residue Lys-148 is modified to N6-carboxylysine.

The protein belongs to the metallo-dependent hydrolases superfamily. Allantoinase family. Homotetramer. Zn(2+) is required as a cofactor. Carboxylation allows a single lysine to coordinate two zinc ions.

The enzyme catalyses (S)-allantoin + H2O = allantoate + H(+). It participates in nitrogen metabolism; (S)-allantoin degradation; allantoate from (S)-allantoin: step 1/1. Its function is as follows. Catalyzes the conversion of allantoin (5-ureidohydantoin) to allantoic acid by hydrolytic cleavage of the five-member hydantoin ring. The sequence is that of Allantoinase from Desulfitobacterium hafniense (strain Y51).